The chain runs to 884 residues: DNA mismatch repair protein MutS (884 aa).

651-658 (GPNMSGKS) serves as a coordination point for ATP. Residues 843 to 884 (LRNQGKSQPAQKNCKKEPAPNRSPDPAVGDQLSLIPAPLFPD) form a disordered region.

This sequence belongs to the DNA mismatch repair MutS family.

Its function is as follows. This protein is involved in the repair of mismatches in DNA. It is possible that it carries out the mismatch recognition step. This protein has a weak ATPase activity. The polypeptide is DNA mismatch repair protein MutS (Synechococcus sp. (strain JA-2-3B'a(2-13)) (Cyanobacteria bacterium Yellowstone B-Prime)).